A 225-amino-acid polypeptide reads, in one-letter code: PKHD-type hydroxylase YbiX (225 aa).

The 100-residue stretch at 78–177 folds into the Fe2OG dioxygenase domain; the sequence is TLSTPLFNRY…RVASFMWIQS (100 aa). Residues His-96, Asp-98, and His-158 each coordinate Fe cation. Arg-168 is a binding site for 2-oxoglutarate.

It depends on Fe(2+) as a cofactor. L-ascorbate serves as cofactor.

The polypeptide is PKHD-type hydroxylase YbiX (Escherichia coli O81 (strain ED1a)).